A 409-amino-acid polypeptide reads, in one-letter code: LL-diaminopimelate aminotransferase (409 aa).

Positions 15 and 42 each coordinate substrate. Pyridoxal 5'-phosphate-binding positions include tyrosine 72, 108-109 (SK), tyrosine 132, asparagine 187, tyrosine 218, and 246-248 (SFS). Residues lysine 109, tyrosine 132, and asparagine 187 each coordinate substrate. Lysine 249 is subject to N6-(pyridoxal phosphate)lysine. Residues arginine 257 and asparagine 292 each contribute to the pyridoxal 5'-phosphate site. Substrate contacts are provided by asparagine 292 and arginine 388.

This sequence belongs to the class-I pyridoxal-phosphate-dependent aminotransferase family. LL-diaminopimelate aminotransferase subfamily. As to quaternary structure, homodimer. The cofactor is pyridoxal 5'-phosphate.

It catalyses the reaction (2S,6S)-2,6-diaminopimelate + 2-oxoglutarate = (S)-2,3,4,5-tetrahydrodipicolinate + L-glutamate + H2O + H(+). The protein operates within amino-acid biosynthesis; L-lysine biosynthesis via DAP pathway; LL-2,6-diaminopimelate from (S)-tetrahydrodipicolinate (aminotransferase route): step 1/1. Its function is as follows. Involved in the synthesis of meso-diaminopimelate (m-DAP or DL-DAP), required for both lysine and peptidoglycan biosynthesis. Catalyzes the direct conversion of tetrahydrodipicolinate to LL-diaminopimelate. In Acaryochloris marina (strain MBIC 11017), this protein is LL-diaminopimelate aminotransferase.